The primary structure comprises 282 residues: Probable protein phosphatase 2C 10 (282 aa).

Positions 34 to 281 constitute a PPM-type phosphatase domain; that stretch reads KFGYSLVKGK…DDISCIVVRL (248 aa). Residues Asp-71, Gly-72, Asp-233, and Asp-272 each coordinate Mn(2+).

This sequence belongs to the PP2C family. The cofactor is Mg(2+). Requires Mn(2+) as cofactor.

It carries out the reaction O-phospho-L-seryl-[protein] + H2O = L-seryl-[protein] + phosphate. The catalysed reaction is O-phospho-L-threonyl-[protein] + H2O = L-threonyl-[protein] + phosphate. The chain is Probable protein phosphatase 2C 10 from Arabidopsis thaliana (Mouse-ear cress).